A 148-amino-acid polypeptide reads, in one-letter code: tRNA-specific adenosine deaminase (148 aa).

In terms of domain architecture, CMP/dCMP-type deaminase spans 1-116 (MEQALKQARL…SNLRYFNSSA (116 aa)). H48 serves as a coordination point for Zn(2+). E50 (proton donor) is an active-site residue. 2 residues coordinate Zn(2+): C78 and C81.

It belongs to the cytidine and deoxycytidylate deaminase family. In terms of assembly, homodimer. Zn(2+) is required as a cofactor.

It catalyses the reaction adenosine(34) in tRNA + H2O + H(+) = inosine(34) in tRNA + NH4(+). Functionally, catalyzes the deamination of adenosine to inosine at the wobble position 34 of tRNA(Arg2). This chain is tRNA-specific adenosine deaminase, found in Rickettsia typhi (strain ATCC VR-144 / Wilmington).